A 908-amino-acid chain; its full sequence is Protein translocase subunit SecA (908 aa).

ATP-binding positions include glutamine 87, 105 to 109, and aspartate 512; that span reads GEGKT. The interval 882 to 908 is disordered; that stretch reads DGEKVGRNDPCPCGSGKKYKQCHGKLT. 4 residues coordinate Zn(2+): cysteine 892, cysteine 894, cysteine 903, and histidine 904. Over residues 898–908 the composition is skewed to basic residues; that stretch reads KKYKQCHGKLT.

This sequence belongs to the SecA family. Monomer and homodimer. Part of the essential Sec protein translocation apparatus which comprises SecA, SecYEG and auxiliary proteins SecDF-YajC and YidC. Requires Zn(2+) as cofactor.

The protein resides in the cell inner membrane. Its subcellular location is the cytoplasm. It carries out the reaction ATP + H2O + cellular proteinSide 1 = ADP + phosphate + cellular proteinSide 2.. Functionally, part of the Sec protein translocase complex. Interacts with the SecYEG preprotein conducting channel. Has a central role in coupling the hydrolysis of ATP to the transfer of proteins into and across the cell membrane, serving both as a receptor for the preprotein-SecB complex and as an ATP-driven molecular motor driving the stepwise translocation of polypeptide chains across the membrane. The sequence is that of Protein translocase subunit SecA from Shewanella amazonensis (strain ATCC BAA-1098 / SB2B).